A 431-amino-acid polypeptide reads, in one-letter code: Trigger factor (431 aa).

The PPIase FKBP-type domain occupies 163-248 (GDTVVIDYAG…IHEVKGKELP (86 aa)).

The protein belongs to the FKBP-type PPIase family. Tig subfamily.

Its subcellular location is the cytoplasm. It carries out the reaction [protein]-peptidylproline (omega=180) = [protein]-peptidylproline (omega=0). Its function is as follows. Involved in protein export. Acts as a chaperone by maintaining the newly synthesized protein in an open conformation. Functions as a peptidyl-prolyl cis-trans isomerase. This is Trigger factor from Latilactobacillus sakei subsp. sakei (strain 23K) (Lactobacillus sakei subsp. sakei).